A 478-amino-acid chain; its full sequence is Quinoprotein glucose dehydrogenase B (478 aa).

An N-terminal signal peptide occupies residues M1–A24. Residues Q100 and D167 each coordinate D-glucose. H168 serves as the catalytic Proton acceptor. D-glucose-binding residues include Q192 and R252. The tract at residues R252–N253 is PQQ. Positions 271, 272, 277, 287, 293, 295, 297, and 333 each coordinate Ca(2+). Positions 367, 372, and 401 each coordinate pyrroloquinoline quinone. The tract at residues R430 to R432 is PQQ.

The protein belongs to the PQQ oxidoreductase GdhB family. As to quaternary structure, homodimer. Requires pyrroloquinoline quinone as cofactor. Ca(2+) serves as cofactor.

The enzyme catalyses a ubiquinone + D-glucose = D-glucono-1,5-lactone + a ubiquinol. In terms of biological role, oxidizes glucose to gluconolactone. This Acinetobacter calcoaceticus protein is Quinoprotein glucose dehydrogenase B (gdhB).